We begin with the raw amino-acid sequence, 223 residues long: Glutathione S-transferase A2 (223 aa).

Position 2 is an N-acetylalanine (Ala-2). A GST N-terminal domain is found at 3–83 (GKPKLHYFNG…YIATKYNLYG (81 aa)). The residue at position 4 (Lys-4) is an N6-succinyllysine. Glutathione-binding positions include Tyr-9, Arg-45, 54–55 (QV), and 67–68 (QT). One can recognise a GST C-terminal domain in the interval 85–208 (DMKERALIDM…QPGSQRKPPM (124 aa)).

This sequence belongs to the GST superfamily. Alpha family. As to quaternary structure, homodimer. As to expression, expressed in corpus luteum, adrenal gland, testis, liver, lung, thyroid and kidney.

The protein localises to the cytoplasm. It catalyses the reaction RX + glutathione = an S-substituted glutathione + a halide anion + H(+). Functionally, conjugation of reduced glutathione to a wide number of exogenous and endogenous hydrophobic electrophiles. The chain is Glutathione S-transferase A2 (GSTA2) from Bos taurus (Bovine).